The following is a 495-amino-acid chain: MPTESASCSTARQTKQKRKSHSLSIRRTNSSEQERTGLPRDMLEGQDSKLPSSVRSTLLELFGQIEREFENLYIENLELRREIDTLNERLAAEGQAIDGAELSKGQLKTKASHSTSQLSQKLKTTYKASTSKIVSSFKTTTSRAACQLVKEYIGHRDGIWDVSVAKTQPVVLGTASADHTALLWSIETGKCLVKYAGHVGSVNSIKFHPSEQLALTASGDQTAHIWRYAVQLPTPQPVADTSQISGEDEVECSDKDEPDLDGDVSSDCPTIRVPLTSLKSHQGVVIAADWLVGGKQAVTASWDRTANLYDVETSELVHSLTGHDQELTHCCTHPTQRLVVTSSRDTTFRLWDFRDPSIHSVNVFQGHTDTVTSAVFTVGDNVVSGSDDRTVKVWDLKNMRSPIATIRTDSAINRINVCVGQKIIALPHDNRQVRLFDMSGVRLARLPRSSRQGHRRMVCCSAWSEDHPVCNLFTCGFDRQAIGWNINIPALLQEK.

2 stretches are compositionally biased toward polar residues: residues 1-13 (MPTE…TARQ) and 22-31 (SLSIRRTNSS). Residues 1 to 50 (MPTESASCSTARQTKQKRKSHSLSIRRTNSSEQERTGLPRDMLEGQDSKL) form a disordered region. Residues 32-47 (EQERTGLPRDMLEGQD) are compositionally biased toward basic and acidic residues. WD repeat units follow at residues 154–194 (GHRD…CLVK) and 197–236 (GHVG…PTPQ). Positions 237–266 (PVADTSQISGEDEVECSDKDEPDLDGDVSS) are disordered. Acidic residues predominate over residues 246-264 (GEDEVECSDKDEPDLDGDV). WD repeat units lie at residues 280–319 (SHQG…LVHS), 322–361 (GHDQ…IHSV), 366–404 (GHTD…SPIA), 407–446 (RTDS…LARL), and 453–494 (GHRR…LLQE).

Forms homodimers. Interacts with PACS1. Interacts with PACS2.

It localises to the cytoplasm. Its subcellular location is the nucleus. Required for normal ER Ca2+ handling in lymphocytes. Together with PACS1, it plays an essential role in stabilizing peripheral lymphocyte populations. In Pongo abelii (Sumatran orangutan), this protein is WD repeat-containing protein 37 (WDR37).